A 173-amino-acid polypeptide reads, in one-letter code: DNA-directed RNA polymerase subunit delta (173 aa).

The HTH HARE-type domain maps to 14-81; the sequence is MALVEIAHEL…SDQTWGLRSW (68 aa). Positions 110 to 173 are disordered; sequence LDLDEFEEID…DYDDEEEEIK (64 aa).

It belongs to the RpoE family. In terms of assembly, RNAP is composed of a core of 2 alpha, a beta and a beta' subunit. The core is associated with a delta subunit, and at least one of epsilon or omega. When a sigma factor is associated with the core the holoenzyme is formed, which can initiate transcription.

Functionally, participates in both the initiation and recycling phases of transcription. In the presence of the delta subunit, RNAP displays an increased specificity of transcription, a decreased affinity for nucleic acids, and an increased efficiency of RNA synthesis because of enhanced recycling. May function in sigma factor switching. It displaces RNA bound to RNA polymerase in a binary complex. In Bacillus subtilis (strain 168), this protein is DNA-directed RNA polymerase subunit delta.